An 87-amino-acid chain; its full sequence is MANIKSAKKRAIQSEKARKIIASRRSMMRPFIKKGDAAIEAGDKAAAQKAFNEMQPIVDRQAAKGLIHKNKAARHKANLTAQINKLA.

The protein belongs to the bacterial ribosomal protein bS20 family.

Its function is as follows. Binds directly to 16S ribosomal RNA. In Shigella flexneri, this protein is Small ribosomal subunit protein bS20.